The chain runs to 470 residues: Cysteine--tRNA ligase (470 aa).

Cysteine 28 lines the Zn(2+) pocket. A 'HIGH' region motif is present at residues 30–40 (PTVYNYIHIGN). The Zn(2+) site is built by cysteine 212, histidine 237, and glutamate 241. The short motif at 271-275 (KMSKS) is the 'KMSKS' region element. An ATP-binding site is contributed by lysine 274.

The protein belongs to the class-I aminoacyl-tRNA synthetase family. Monomer. Zn(2+) serves as cofactor.

It is found in the cytoplasm. It carries out the reaction tRNA(Cys) + L-cysteine + ATP = L-cysteinyl-tRNA(Cys) + AMP + diphosphate. The chain is Cysteine--tRNA ligase from Limosilactobacillus reuteri (strain DSM 20016) (Lactobacillus reuteri).